The following is a 126-amino-acid chain: Small ribosomal subunit protein uS13 (126 aa).

A disordered region spans residues 94–126; sequence RNLPVHGQRTHTNARTRKGPRRAIAGKKKAGKK.

The protein belongs to the universal ribosomal protein uS13 family. As to quaternary structure, part of the 30S ribosomal subunit. Forms a loose heterodimer with protein S19. Forms two bridges to the 50S subunit in the 70S ribosome.

Functionally, located at the top of the head of the 30S subunit, it contacts several helices of the 16S rRNA. In the 70S ribosome it contacts the 23S rRNA (bridge B1a) and protein L5 of the 50S subunit (bridge B1b), connecting the 2 subunits; these bridges are implicated in subunit movement. Contacts the tRNAs in the A and P-sites. In Parafrankia sp. (strain EAN1pec), this protein is Small ribosomal subunit protein uS13.